The primary structure comprises 369 residues: Mannose-1-phosphate guanylyltransferase catalytic subunit beta (369 aa).

Residues 12 to 231 (RALILVGGYG…TGFWMDIGQP (220 aa)) are substrate-binding domain. Residue Asp-120 participates in GDP-alpha-D-mannose binding. Asp-120 lines the Mg(2+) pocket. The active site involves Lys-171. Asp-227 serves as a coordination point for GDP-alpha-D-mannose. Residue Asp-227 coordinates Mg(2+). The tract at residues 254-369 (YTGPGVVGNV…ASVPEPQIIM (116 aa)) is hexapeptide repeat domain.

It belongs to the transferase hexapeptide repeat family. In terms of assembly, component of the GMPPA-GMPPB mannose-1-phosphate guanylyltransferase complex composed of 4 Gmppa subunits and 8 Gmppb subunits; the complex is organized into three layers, a central layer made up of 2 Gmppa dimers sandwiched between two layers each made up of 2 Gmppb dimers. Gmppb catalytic activity is reduced when part of the complex and binding of GDP-alpha-D-Mannose by Gmppa induces allosteric feedback inhibition of Gmppb. Mg(2+) is required as a cofactor.

It carries out the reaction alpha-D-mannose 1-phosphate + GTP + H(+) = GDP-alpha-D-mannose + diphosphate. It participates in nucleotide-sugar biosynthesis; GDP-alpha-D-mannose biosynthesis; GDP-alpha-D-mannose from alpha-D-mannose 1-phosphate (GTP route): step 1/1. Enzyme activity is reduced by incorporation into the GMPPA-GMPPB mannose-1-phosphate guanylyltransferase complex. Allosterically inhibited, when part of the GMPPA-GMPPB complex, by GDP-alpha-D-mannose binding to Gmppa. Functionally, catalytic subunit of the GMPPA-GMPPB mannose-1-phosphate guanylyltransferase complex. Catalyzes the formation of GDP-mannose, an essential precursor of glycan moieties of glycoproteins and glycolipids. Can catalyze the reverse reaction in vitro. Together with GMPPA regulates GDP-alpha-D-mannose levels. The protein is Mannose-1-phosphate guanylyltransferase catalytic subunit beta of Drosophila melanogaster (Fruit fly).